The following is a 371-amino-acid chain: Mitogen-activated protein kinase homolog MMK2 (371 aa).

The 287-residue stretch at 37–323 folds into the Protein kinase domain; the sequence is VPPIRSVGRG…VDEALCHPYM (287 aa). ATP is bound by residues 43 to 51 and Lys-66; that span reads VGRGAYGIV. Residue Asp-163 is the Proton acceptor of the active site. The residue at position 195 (Thr-195) is a Phosphothreonine. Positions 195–197 match the TXY motif; that stretch reads TEY. Phosphotyrosine is present on Tyr-197.

This sequence belongs to the protein kinase superfamily. CMGC Ser/Thr protein kinase family. MAP kinase subfamily. It depends on Mg(2+) as a cofactor. In terms of processing, dually phosphorylated on Thr-195 and Tyr-197, which activates the enzyme. Autophosphorylated.

It carries out the reaction L-seryl-[protein] + ATP = O-phospho-L-seryl-[protein] + ADP + H(+). The enzyme catalyses L-threonyl-[protein] + ATP = O-phospho-L-threonyl-[protein] + ADP + H(+). Its activity is regulated as follows. Activated by tyrosine and threonine phosphorylation. The protein is Mitogen-activated protein kinase homolog MMK2 (MMK2) of Medicago sativa (Alfalfa).